The following is a 590-amino-acid chain: tRNA-guanine(15) transglycosylase (590 aa).

Asp90 acts as the Nucleophile in catalysis. Asp125 contributes to the substrate binding site. The Zn(2+) site is built by Cys278, Cys280, and Cys283. The 76-residue stretch at 502–577 folds into the PUA domain; that stretch reads KGRVVVKGLF…HPFIIIRRHV (76 aa).

Belongs to the archaeosine tRNA-ribosyltransferase family. It depends on Zn(2+) as a cofactor.

It catalyses the reaction guanosine(15) in tRNA + 7-cyano-7-deazaguanine = 7-cyano-7-carbaguanosine(15) in tRNA + guanine. The protein operates within tRNA modification; archaeosine-tRNA biosynthesis. Functionally, exchanges the guanine residue with 7-cyano-7-deazaguanine (preQ0) at position 15 in the dihydrouridine loop (D-loop) of archaeal tRNAs. The protein is tRNA-guanine(15) transglycosylase of Korarchaeum cryptofilum (strain OPF8).